The chain runs to 447 residues: Argininosuccinate synthase (447 aa).

ATP is bound by residues 17-25 (AFSGGLDTS) and alanine 43. Tyrosine 99 lines the L-citrulline pocket. Glycine 129 and threonine 131 together coordinate ATP. L-aspartate is bound by residues threonine 131, asparagine 135, and aspartate 136. Asparagine 135 serves as a coordination point for L-citrulline. Aspartate 136 contributes to the ATP binding site. 2 residues coordinate L-citrulline: arginine 139 and serine 192. Aspartate 194 provides a ligand contact to ATP. Residues threonine 201, glutamate 203, and glutamate 280 each coordinate L-citrulline.

This sequence belongs to the argininosuccinate synthase family. Type 2 subfamily. Homotetramer.

The protein localises to the cytoplasm. The enzyme catalyses L-citrulline + L-aspartate + ATP = 2-(N(omega)-L-arginino)succinate + AMP + diphosphate + H(+). It participates in amino-acid biosynthesis; L-arginine biosynthesis; L-arginine from L-ornithine and carbamoyl phosphate: step 2/3. This chain is Argininosuccinate synthase, found in Escherichia coli O127:H6 (strain E2348/69 / EPEC).